The chain runs to 548 residues: LDL receptor repeat-containing protein egg-2 (548 aa).

The Cytoplasmic segment spans residues 1 to 49; sequence MSQQAGNAQRGRFDEEPMSLGEKISHRMDQLKEIVSSSCPCAGKFPPVA. The chain crosses the membrane as a helical; Signal-anchor for type II membrane protein span at residues 50–70; the sequence is IVLIVALIILGVIIAVPLVIF. The Extracellular portion of the chain corresponds to 71-548; the sequence is LSPSAQAMSS…LALKNSGLRP (478 aa). A glycan (N-linked (GlcNAc...) asparagine) is linked at Asn119. LDL-receptor class A domains are found at residues 122–160, 161–213, 215–252, 253–288, 291–328, 370–412, 416–454, and 455–492; these read TCSG…ENCK, ECQS…ASCR, KCSK…SNCN, KCQK…HQCD, TCSG…ENCP, KCDP…KKCT, ECVV…KGCD, and KCPS…HKCS. 23 disulfide bridges follow: Cys130-Cys150, Cys144-Cys159, Cys162-Cys190, Cys168-Cys203, Cys197-Cys212, Cys216-Cys229, Cys223-Cys242, Cys236-Cys251, Cys254-Cys265, Cys261-Cys278, Cys272-Cys287, Cys292-Cys305, Cys300-Cys318, Cys312-Cys327, Cys371-Cys389, Cys379-Cys402, Cys396-Cys411, Cys417-Cys431, Cys427-Cys444, Cys438-Cys453, Cys456-Cys469, Cys463-Cys482, and Cys476-Cys491. Asn244 carries N-linked (GlcNAc...) asparagine glycosylation. An N-linked (GlcNAc...) asparagine glycan is attached at Asn527.

The protein localises to the cell membrane. It localises to the endosome membrane. In terms of biological role, probable receptor which is required for the oocyte-to-zygote transition although its exact function is controversial. Redundantly with egg-1, seems to be required for fertilization probably by promoting the interaction or fusion between sperm and oocyte. Conversely, shown to be dispensable for fertilization but required together with egg-1 for the formation of a continuous and cohesive eggshell chitin layer by maintaining a homogenous distribution of chitin synthase chs-1 at the unfertilized oocyte cell membrane. Appears to recruit or maintain together to the unfertilized oocyte cortex several proteins including chs-1, kinase mbk-2 and pseudophosphatase egg-3, and possibly egg-4 and egg-5. This is LDL receptor repeat-containing protein egg-2 from Caenorhabditis elegans.